The chain runs to 130 residues: Acyl carrier protein 2, chloroplastic (130 aa).

The transit peptide at 1-48 (MASITGSSVSFKCAPLQSSFNSKNYALKSSVTFWRRTPVMPRGLSVSC) directs the protein to the chloroplast. The 76-residue stretch at 52 to 127 (PEMVTKVSDI…EAADMIEALQ (76 aa)) folds into the Carrier domain. O-(pantetheine 4'-phosphoryl)serine is present on serine 87.

This sequence belongs to the acyl carrier protein (ACP) family. In terms of processing, 4'-phosphopantetheine is transferred from CoA to a specific serine of apo-ACP by acpS. This modification is essential for activity because fatty acids are bound in thioester linkage to the sulfhydryl of the prosthetic group. As to expression, roots, leaves and seeds.

The protein resides in the plastid. Its subcellular location is the chloroplast. It functions in the pathway lipid metabolism; fatty acid biosynthesis. Its function is as follows. Carrier of the growing fatty acid chain in fatty acid biosynthesis. The polypeptide is Acyl carrier protein 2, chloroplastic (ACL1.2) (Spinacia oleracea (Spinach)).